Reading from the N-terminus, the 194-residue chain is Fe/S biogenesis protein NfuA (194 aa).

[4Fe-4S] cluster-binding residues include C151 and C154.

The protein belongs to the NfuA family. In terms of assembly, homodimer. Requires [4Fe-4S] cluster as cofactor.

Its function is as follows. Involved in iron-sulfur cluster biogenesis. Binds a 4Fe-4S cluster, can transfer this cluster to apoproteins, and thereby intervenes in the maturation of Fe/S proteins. Could also act as a scaffold/chaperone for damaged Fe/S proteins. The sequence is that of Fe/S biogenesis protein NfuA from Aliivibrio fischeri (strain ATCC 700601 / ES114) (Vibrio fischeri).